Reading from the N-terminus, the 414-residue chain is Succinylornithine transaminase (414 aa).

Lys260 is modified (N6-(pyridoxal phosphate)lysine).

The protein belongs to the class-III pyridoxal-phosphate-dependent aminotransferase family. AstC subfamily. It depends on pyridoxal 5'-phosphate as a cofactor.

The catalysed reaction is N(2)-succinyl-L-ornithine + 2-oxoglutarate = N-succinyl-L-glutamate 5-semialdehyde + L-glutamate. The protein operates within amino-acid degradation; L-arginine degradation via AST pathway; L-glutamate and succinate from L-arginine: step 3/5. Catalyzes the transamination of N(2)-succinylornithine and alpha-ketoglutarate into N(2)-succinylglutamate semialdehyde and glutamate. Can also act as an acetylornithine aminotransferase. The polypeptide is Succinylornithine transaminase (Yersinia enterocolitica serotype O:8 / biotype 1B (strain NCTC 13174 / 8081)).